Here is a 435-residue protein sequence, read N- to C-terminus: ATP-dependent protease ATPase subunit HslU (435 aa).

ATP-binding positions include Val18, 60 to 65 (GVGKTE), Asp248, Glu313, and Arg385.

The protein belongs to the ClpX chaperone family. HslU subfamily. In terms of assembly, a double ring-shaped homohexamer of HslV is capped on each side by a ring-shaped HslU homohexamer. The assembly of the HslU/HslV complex is dependent on binding of ATP.

Its subcellular location is the cytoplasm. Its function is as follows. ATPase subunit of a proteasome-like degradation complex; this subunit has chaperone activity. The binding of ATP and its subsequent hydrolysis by HslU are essential for unfolding of protein substrates subsequently hydrolyzed by HslV. HslU recognizes the N-terminal part of its protein substrates and unfolds these before they are guided to HslV for hydrolysis. The chain is ATP-dependent protease ATPase subunit HslU from Parvibaculum lavamentivorans (strain DS-1 / DSM 13023 / NCIMB 13966).